The primary structure comprises 186 residues: GMP synthase [glutamine-hydrolyzing] subunit A (186 aa).

In terms of domain architecture, Glutamine amidotransferase type-1 spans 2–186 (SIVIINNFGQ…ENFNKICENY (185 aa)). The active-site Nucleophile is Cys-76. Active-site residues include His-163 and Glu-165.

Heterodimer composed of a glutamine amidotransferase subunit (A) and a GMP-binding subunit (B).

The catalysed reaction is XMP + L-glutamine + ATP + H2O = GMP + L-glutamate + AMP + diphosphate + 2 H(+). It participates in purine metabolism; GMP biosynthesis; GMP from XMP (L-Gln route): step 1/1. In terms of biological role, catalyzes the synthesis of GMP from XMP. The sequence is that of GMP synthase [glutamine-hydrolyzing] subunit A from Methanosphaera stadtmanae (strain ATCC 43021 / DSM 3091 / JCM 11832 / MCB-3).